A 166-amino-acid polypeptide reads, in one-letter code: Lipoprotein signal peptidase (166 aa).

The next 3 helical transmembrane spans lie at 12–32 (WLWL…LILQ), 70–90 (WFFA…MYRA), and 102–122 (ALII…GFVV). Residues aspartate 123 and aspartate 141 contribute to the active site. The helical transmembrane segment at 142–162 (SAICFGAAMIVLEGFLPNAAA) threads the bilayer.

Belongs to the peptidase A8 family.

It localises to the cell inner membrane. It carries out the reaction Release of signal peptides from bacterial membrane prolipoproteins. Hydrolyzes -Xaa-Yaa-Zaa-|-(S,diacylglyceryl)Cys-, in which Xaa is hydrophobic (preferably Leu), and Yaa (Ala or Ser) and Zaa (Gly or Ala) have small, neutral side chains.. The protein operates within protein modification; lipoprotein biosynthesis (signal peptide cleavage). Functionally, this protein specifically catalyzes the removal of signal peptides from prolipoproteins. The chain is Lipoprotein signal peptidase from Enterobacter sp. (strain 638).